A 225-amino-acid polypeptide reads, in one-letter code: Orotate phosphoribosyltransferase (225 aa).

5-phospho-alpha-D-ribose 1-diphosphate is bound by residues R107, K108, K111, and 133 to 141 (EDLTTDGGS). Position 137 (T137) interacts with orotate.

The protein belongs to the purine/pyrimidine phosphoribosyltransferase family. PyrE subfamily. Homodimer. It depends on Mg(2+) as a cofactor.

The catalysed reaction is orotidine 5'-phosphate + diphosphate = orotate + 5-phospho-alpha-D-ribose 1-diphosphate. It functions in the pathway pyrimidine metabolism; UMP biosynthesis via de novo pathway; UMP from orotate: step 1/2. In terms of biological role, catalyzes the transfer of a ribosyl phosphate group from 5-phosphoribose 1-diphosphate to orotate, leading to the formation of orotidine monophosphate (OMP). The polypeptide is Orotate phosphoribosyltransferase (Roseobacter denitrificans (strain ATCC 33942 / OCh 114) (Erythrobacter sp. (strain OCh 114))).